Consider the following 405-residue polypeptide: Riboflavin biosynthesis protein RibBA (405 aa).

The DHBP synthase stretch occupies residues 1 to 205; sequence MEQIKLDSIA…IKDLIEYRLT (205 aa). D-ribulose 5-phosphate is bound by residues 30 to 31, Asp35, 144 to 148, and Glu168; these read RE and RVGHT. Residue Glu31 coordinates Mg(2+). Mg(2+) is bound at residue His147. The interval 206-405 is GTP cyclohydrolase II; the sequence is HESLVKREIG…KMGHTILKKD (200 aa). 256–260 contributes to the GTP binding site; that stretch reads RVHSS. Cys261, Cys272, and Cys274 together coordinate Zn(2+). GTP-binding positions include Gln277, 299–301, and Thr321; that span reads EGR. The active-site Proton acceptor; for GTP cyclohydrolase activity is Asp333. The Nucleophile; for GTP cyclohydrolase activity role is filled by Arg335. Residues Thr356 and Lys361 each coordinate GTP.

The protein in the N-terminal section; belongs to the DHBP synthase family. This sequence in the C-terminal section; belongs to the GTP cyclohydrolase II family. Requires Mg(2+) as cofactor. Mn(2+) serves as cofactor. Zn(2+) is required as a cofactor.

It carries out the reaction D-ribulose 5-phosphate = (2S)-2-hydroxy-3-oxobutyl phosphate + formate + H(+). It catalyses the reaction GTP + 4 H2O = 2,5-diamino-6-hydroxy-4-(5-phosphoribosylamino)-pyrimidine + formate + 2 phosphate + 3 H(+). Its pathway is cofactor biosynthesis; riboflavin biosynthesis; 2-hydroxy-3-oxobutyl phosphate from D-ribulose 5-phosphate: step 1/1. The protein operates within cofactor biosynthesis; riboflavin biosynthesis; 5-amino-6-(D-ribitylamino)uracil from GTP: step 1/4. In terms of biological role, catalyzes the conversion of D-ribulose 5-phosphate to formate and 3,4-dihydroxy-2-butanone 4-phosphate. Functionally, catalyzes the conversion of GTP to 2,5-diamino-6-ribosylamino-4(3H)-pyrimidinone 5'-phosphate (DARP), formate and pyrophosphate. This Cytophaga hutchinsonii (strain ATCC 33406 / DSM 1761 / CIP 103989 / NBRC 15051 / NCIMB 9469 / D465) protein is Riboflavin biosynthesis protein RibBA.